A 356-amino-acid chain; its full sequence is MKIGFLSRWGATCGVGMHAEILAREFIRMGHEVVVFAPTEESASKEVKYYKRTEAQDPEFVKREIYTEVDNVTEEGWVKEEEILKENLDLLIIETFWRVPVKPLTRLIEKLKIPVISVFHEANIFKAREVVKLPCDKIVVFDRRFYDEILEFYEIPREKVEVISYPVMKPYDAEPERPVSEDKFLFFSFGRQPVEEYCDFLNALKKLRKRFDNVHYWIIRSDGRVDYEAEWITQWQKRPTVEKLYSYLKGSNVHLLPKGNTPNVVVSSTLYQIIASETPIVIRDSRFVETIETDVYGFGPIVKYRNIHDLVHKLELLMLDRELVEDIKKEVRVFVEKYGGDKIAQEFLDLAKTITK.

This sequence belongs to the MDIP synthase family. The cofactor is Mg(2+).

It carries out the reaction bis(myo-inositol) 1,3'-phosphate + GDP-alpha-D-mannose = 2-O-(beta-D-mannosyl)-bis(myo-inositol) 1,3'-phosphate + GDP + H(+). The enzyme catalyses 2-O-(beta-D-mannosyl)-bis(myo-inositol) 1,3'-phosphate + GDP-alpha-D-mannose = 2-O-(beta-D-mannosyl-(1-&gt;2)-beta-D-mannosyl)-bis(myo-inositol) 1,3'-phosphate + GDP + H(+). The catalysed reaction is bis(myo-inositol) 1,3'-phosphate + 2 GDP-alpha-D-mannose = 2-O-(beta-D-mannosyl-(1-&gt;2)-beta-D-mannosyl)-bis(myo-inositol) 1,3'-phosphate + 2 GDP + 2 H(+). Catalyzes the transfer of the mannosyl group from GDP-mannose to di-myo-inositol-1,3'-phosphate (DIP), producing mannosyl-di-myo-inositol phosphate (MDIP). Can also use MDIP as an acceptor of a second mannose residue, yielding di-mannosyl-di-myo-inositol phosphate (MMDIP). Minor amounts of the tri-mannosylated form are also formed. This is GDP-mannose:di-myo-inositol-1,3'-phosphate beta-1,2-mannosyltransferase from Thermotoga maritima (strain ATCC 43589 / DSM 3109 / JCM 10099 / NBRC 100826 / MSB8).